A 283-amino-acid chain; its full sequence is Protein/nucleic acid deglycase HchA (283 aa).

His-86, Glu-91, and His-123 together coordinate Zn(2+). The Nucleophile role is filled by Cys-185.

This sequence belongs to the peptidase C56 family. HchA subfamily. In terms of assembly, homodimer.

It localises to the cytoplasm. It carries out the reaction N(omega)-(1-hydroxy-2-oxopropyl)-L-arginyl-[protein] + H2O = lactate + L-arginyl-[protein] + H(+). The catalysed reaction is N(6)-(1-hydroxy-2-oxopropyl)-L-lysyl-[protein] + H2O = lactate + L-lysyl-[protein] + H(+). It catalyses the reaction S-(1-hydroxy-2-oxopropyl)-L-cysteinyl-[protein] + H2O = lactate + L-cysteinyl-[protein] + H(+). The enzyme catalyses N(omega)-(1-hydroxy-2-oxoethyl)-L-arginyl-[protein] + H2O = L-arginyl-[protein] + glycolate + H(+). It carries out the reaction N(6)-(1-hydroxy-2-oxoethyl)-L-lysyl-[protein] + H2O = glycolate + L-lysyl-[protein] + H(+). The catalysed reaction is S-(1-hydroxy-2-oxoethyl)-L-cysteinyl-[protein] + H2O = glycolate + L-cysteinyl-[protein] + H(+). It catalyses the reaction N(2)-(1-hydroxy-2-oxopropyl)-dGTP + H2O = lactate + dGTP + H(+). The enzyme catalyses N(2)-(1-hydroxy-2-oxopropyl)-GTP + H2O = lactate + GTP + H(+). It carries out the reaction N(2)-(1-hydroxy-2-oxopropyl)-GDP + H2O = lactate + GDP + H(+). The catalysed reaction is N(2)-(1-hydroxy-2-oxopropyl)-GMP + H2O = lactate + GMP + H(+). It catalyses the reaction N(2)-(1-hydroxy-2-oxoethyl)-dGTP + H2O = dGTP + glycolate + H(+). The enzyme catalyses N(2)-(1-hydroxy-2-oxoethyl)-GTP + H2O = glycolate + GTP + H(+). It carries out the reaction N(2)-(1-hydroxy-2-oxoethyl)-GDP + H2O = glycolate + GDP + H(+). The catalysed reaction is N(2)-(1-hydroxy-2-oxoethyl)-GMP + H2O = glycolate + GMP + H(+). It catalyses the reaction an N(2)-(1-hydroxy-2-oxopropyl)-guanosine in RNA + H2O = a guanosine in RNA + lactate + H(+). The enzyme catalyses an N(2)-(1-hydroxy-2-oxopropyl)-2'-deoxyguanosine in DNA + H2O = a 2'-deoxyguanosine in DNA + lactate + H(+). It carries out the reaction an N(2)-(1-hydroxy-2-oxoethyl)-guanosine in RNA + H2O = a guanosine in RNA + glycolate + H(+). The catalysed reaction is an N(2)-(1-hydroxy-2-oxoethyl)-2'-deoxyguanosine in DNA + H2O = a 2'-deoxyguanosine in DNA + glycolate + H(+). Functionally, protein and nucleotide deglycase that catalyzes the deglycation of the Maillard adducts formed between amino groups of proteins or nucleotides and reactive carbonyl groups of glyoxals. Thus, functions as a protein deglycase that repairs methylglyoxal- and glyoxal-glycated proteins, and releases repaired proteins and lactate or glycolate, respectively. Deglycates cysteine, arginine and lysine residues in proteins, and thus reactivates these proteins by reversing glycation by glyoxals. Acts on early glycation intermediates (hemithioacetals and aminocarbinols), preventing the formation of Schiff bases and advanced glycation endproducts (AGE). Also functions as a nucleotide deglycase able to repair glycated guanine in the free nucleotide pool (GTP, GDP, GMP, dGTP) and in DNA and RNA. Is thus involved in a major nucleotide repair system named guanine glycation repair (GG repair), dedicated to reversing methylglyoxal and glyoxal damage via nucleotide sanitization and direct nucleic acid repair. Plays an important role in protecting cells from carbonyl stress. The sequence is that of Protein/nucleic acid deglycase HchA from Escherichia coli O7:K1 (strain IAI39 / ExPEC).